The sequence spans 785 residues: Peptide transporter family 2 (785 aa).

Helical transmembrane passes span 46–66 (FSFY…LNFS), 72–92 (VLFH…SILA), 99–119 (FWTI…LAFS), 134–154 (LLGL…VSAF), 167–187 (ISLF…ISMW), 208–228 (FGIP…GSFW), 303–323 (VIVM…QGST), 345–365 (MGVL…SIVY), and 382–402 (AGGG…QLFV). Asparagine 467 carries an N-linked (GlcNAc...) asparagine glycan. A run of 3 helical transmembrane segments spans residues 670–690 (ILWQ…FSIT), 711–731 (WLFT…LNIF), and 738–758 (MFVF…LAVF).

The protein belongs to the major facilitator superfamily. Proton-dependent oligopeptide transporter (POT/PTR) (TC 2.A.17) family. In terms of tissue distribution, expressed in vulval, pharyngeal and anal muscles.

The protein resides in the membrane. In terms of biological role, proton-dependent uptake of di- or tripeptides, and to a minor extent tetrapeptides. Transport is independent of sodium and chloride ions. Protein shows high affinity to peptide substrates. In Caenorhabditis elegans, this protein is Peptide transporter family 2 (pept-2).